Reading from the N-terminus, the 290-residue chain is Probable protein phosphatase 2C 62 (290 aa).

The PPM-type phosphatase domain maps to 38-288 (KHGYHLVKGK…DDISCIVVKF (251 aa)). Mn(2+) is bound by residues D75, G76, D240, and D279.

This sequence belongs to the PP2C family. The cofactor is Mg(2+). Mn(2+) is required as a cofactor.

The catalysed reaction is O-phospho-L-seryl-[protein] + H2O = L-seryl-[protein] + phosphate. It catalyses the reaction O-phospho-L-threonyl-[protein] + H2O = L-threonyl-[protein] + phosphate. This is Probable protein phosphatase 2C 62 from Oryza sativa subsp. japonica (Rice).